The sequence spans 426 residues: Enolase (426 aa).

Gln-163 contributes to the (2R)-2-phosphoglycerate binding site. Catalysis depends on Glu-205, which acts as the Proton donor. Mg(2+) is bound by residues Asp-242, Glu-286, and Asp-313. Residues Lys-338, Arg-367, Ser-368, and Lys-389 each contribute to the (2R)-2-phosphoglycerate site. The active-site Proton acceptor is the Lys-338.

The protein belongs to the enolase family. Requires Mg(2+) as cofactor.

The protein localises to the cytoplasm. Its subcellular location is the secreted. The protein resides in the cell surface. The catalysed reaction is (2R)-2-phosphoglycerate = phosphoenolpyruvate + H2O. It participates in carbohydrate degradation; glycolysis; pyruvate from D-glyceraldehyde 3-phosphate: step 4/5. Functionally, catalyzes the reversible conversion of 2-phosphoglycerate (2-PG) into phosphoenolpyruvate (PEP). It is essential for the degradation of carbohydrates via glycolysis. This is Enolase from Helicobacter pylori (strain ATCC 700392 / 26695) (Campylobacter pylori).